Here is a 1019-residue protein sequence, read N- to C-terminus: UPF0182 protein Tery_0938 (1019 aa).

9 helical membrane passes run 23-43 (IHIL…GFST), 67-87 (TETW…LVNL), 128-148 (LSLS…GLIL), 192-212 (LWLL…PILW), 213-233 (LSVF…SHWA), 270-290 (FWLI…YLLS), 313-333 (LGGG…FELL), 355-375 (YVFL…QAIF), and 416-436 (AILT…PKIV).

This sequence belongs to the UPF0182 family.

Its subcellular location is the cell membrane. The chain is UPF0182 protein Tery_0938 from Trichodesmium erythraeum (strain IMS101).